The chain runs to 1336 residues: Putative botulinum-like toxin Wo (1336 aa).

A has protease activity region spans residues 1–476 (MDVLEMFDVN…VAGMQRMVSL (476 aa)). His-250 contributes to the Zn(2+) binding site. The active site involves Glu-251. Zn(2+)-binding residues include His-254 and Glu-296.

Belongs to the peptidase M27 family. The cofactor is Zn(2+).

The catalysed reaction is Limited hydrolysis of proteins of the neuroexocytosis apparatus, synaptobrevins, SNAP25 or syntaxin. No detected action on small molecule substrates.. Its activity is regulated as follows. Inhibited by EDTA and 1,10-phenanthroline. Its function is as follows. When overexpressed the N-terminus (residues 1-476) cleaves rat synaptobrevin-2/VAMP2 between '89-Trp-|-Trp-90' in vitro. This releases the cytoplasmic domain of VAMP2 from the synaptic vesicle membrane, which would prevent the assembly of the trans-SNARE complex on the membrane and thus prevent vesicle-target membrane fusion and neurotransmitter release. In Weissella oryzae (strain DSM 25784 / JCM 18191 / LMG 30913 / SG25), this protein is Putative botulinum-like toxin Wo.